A 178-amino-acid chain; its full sequence is Large ribosomal subunit protein uL6 (178 aa).

Belongs to the universal ribosomal protein uL6 family. In terms of assembly, part of the 50S ribosomal subunit.

This protein binds to the 23S rRNA, and is important in its secondary structure. It is located near the subunit interface in the base of the L7/L12 stalk, and near the tRNA binding site of the peptidyltransferase center. The protein is Large ribosomal subunit protein uL6 of Helicobacter pylori (strain Shi470).